Here is a 535-residue protein sequence, read N- to C-terminus: Cytochrome P450 monooxygenase BOA7 (535 aa).

The helical transmembrane segment at 20-37 (SIFLILGFFVLAAILIAW) threads the bilayer. 4 N-linked (GlcNAc...) asparagine glycosylation sites follow: asparagine 65, asparagine 148, asparagine 180, and asparagine 420. A heme-binding site is contributed by cysteine 478.

This sequence belongs to the cytochrome P450 family. Heme serves as cofactor.

The protein localises to the membrane. The protein operates within polyketide biosynthesis. Its function is as follows. Cytochrome P450 monooxygenase; part of the gene cluster B that mediates the biosynthesis of botcinic acid and its botcinin derivatives, acetate-derived polyketides that contribute to virulence when combined with the sesquiterpene botrydial. Botcinic acid and its derivatives have been shown to induce chlorosis and necrosis during host plant infection, but also have antifungal activities. Two polyketide synthases, BOA6 and BOA9, are involved in the biosynthesis of botcinins. BOA6 mediates the formation of the per-methylated tetraketide core by condensation of four units of malonyl-CoA with one unit of acetyl-CoA, which would be methylated in activated methylene groups to yield a bicyclic acid intermediate that could then either be converted to botrylactone derivatives or lose the starter acetate unit through a retro-Claisen type C-C bond cleavage to yield botcinin derivatives. The second polyketide synthase, BOA9, is probably required for the biosynthesis of the tetraketide side chain of botcinins. The methyltransferase (MT) domain within BOA6 is probably responsible for the incorporation of four methyl groups. The trans-enoyl reductase BOA5 might take over the enoyl reductase function of BOA6 that misses an ER domain. The monooxygenases BOA2, BOA3 and BOA4 might be involved in further hydroxylations at C4, C5 and C8, whereas BOA7, close to BOA9, could potentially be involved in the hydroxylation at C4 in the side chain of botcinins. This is Cytochrome P450 monooxygenase BOA7 from Botryotinia fuckeliana (strain B05.10) (Noble rot fungus).